The primary structure comprises 197 residues: Imidazoleglycerol-phosphate dehydratase (197 aa).

This sequence belongs to the imidazoleglycerol-phosphate dehydratase family.

It localises to the cytoplasm. It catalyses the reaction D-erythro-1-(imidazol-4-yl)glycerol 3-phosphate = 3-(imidazol-4-yl)-2-oxopropyl phosphate + H2O. It participates in amino-acid biosynthesis; L-histidine biosynthesis; L-histidine from 5-phospho-alpha-D-ribose 1-diphosphate: step 6/9. This is Imidazoleglycerol-phosphate dehydratase from Bradyrhizobium diazoefficiens (strain JCM 10833 / BCRC 13528 / IAM 13628 / NBRC 14792 / USDA 110).